The sequence spans 303 residues: Recombination-associated protein RdgC (303 aa).

Belongs to the RdgC family.

The protein resides in the cytoplasm. The protein localises to the nucleoid. In terms of biological role, may be involved in recombination. The polypeptide is Recombination-associated protein RdgC (Edwardsiella ictaluri (strain 93-146)).